The sequence spans 71 residues: DNA-directed RNA polymerase subunit omega (71 aa).

It belongs to the RNA polymerase subunit omega family. As to quaternary structure, the RNAP catalytic core consists of 2 alpha, 1 beta, 1 beta' and 1 omega subunit. When a sigma factor is associated with the core the holoenzyme is formed, which can initiate transcription.

The enzyme catalyses RNA(n) + a ribonucleoside 5'-triphosphate = RNA(n+1) + diphosphate. Its function is as follows. Promotes RNA polymerase assembly. Latches the N- and C-terminal regions of the beta' subunit thereby facilitating its interaction with the beta and alpha subunits. The polypeptide is DNA-directed RNA polymerase subunit omega (Alkaliphilus oremlandii (strain OhILAs) (Clostridium oremlandii (strain OhILAs))).